Reading from the N-terminus, the 213-residue chain is FMN-dependent NADH:quinone oxidoreductase (213 aa).

This sequence belongs to the azoreductase type 1 family. In terms of assembly, homodimer. It depends on FMN as a cofactor.

It carries out the reaction 2 a quinone + NADH + H(+) = 2 a 1,4-benzosemiquinone + NAD(+). The catalysed reaction is N,N-dimethyl-1,4-phenylenediamine + anthranilate + 2 NAD(+) = 2-(4-dimethylaminophenyl)diazenylbenzoate + 2 NADH + 2 H(+). In terms of biological role, quinone reductase that provides resistance to thiol-specific stress caused by electrophilic quinones. Also exhibits azoreductase activity. Catalyzes the reductive cleavage of the azo bond in aromatic azo compounds to the corresponding amines. This chain is FMN-dependent NADH:quinone oxidoreductase, found in Streptococcus agalactiae serotype III (strain NEM316).